A 323-amino-acid chain; its full sequence is Lipoyl synthase (323 aa).

Positions 61, 66, 72, 87, 91, 94, and 300 each coordinate [4Fe-4S] cluster. Residues 73 to 289 (WDKKHATFMI…ETVAYSKGFL (217 aa)) enclose the Radical SAM core domain.

This sequence belongs to the radical SAM superfamily. Lipoyl synthase family. [4Fe-4S] cluster serves as cofactor.

It is found in the cytoplasm. It carries out the reaction [[Fe-S] cluster scaffold protein carrying a second [4Fe-4S](2+) cluster] + N(6)-octanoyl-L-lysyl-[protein] + 2 oxidized [2Fe-2S]-[ferredoxin] + 2 S-adenosyl-L-methionine + 4 H(+) = [[Fe-S] cluster scaffold protein] + N(6)-[(R)-dihydrolipoyl]-L-lysyl-[protein] + 4 Fe(3+) + 2 hydrogen sulfide + 2 5'-deoxyadenosine + 2 L-methionine + 2 reduced [2Fe-2S]-[ferredoxin]. It participates in protein modification; protein lipoylation via endogenous pathway; protein N(6)-(lipoyl)lysine from octanoyl-[acyl-carrier-protein]: step 2/2. Functionally, catalyzes the radical-mediated insertion of two sulfur atoms into the C-6 and C-8 positions of the octanoyl moiety bound to the lipoyl domains of lipoate-dependent enzymes, thereby converting the octanoylated domains into lipoylated derivatives. The polypeptide is Lipoyl synthase (Rhizobium leguminosarum bv. trifolii (strain WSM2304)).